A 322-amino-acid chain; its full sequence is Extracellular metalloprotease AFUA_1G07730 (322 aa).

The signal sequence occupies residues 1-22; sequence MLPFNSCVYVLLIISLMSNCRA. 2 N-linked (GlcNAc...) asparagine glycosylation sites follow: Asn-123 and Asn-197. His-233 is a Zn(2+) binding site. Residue Glu-234 is part of the active site. Zn(2+) is bound at residue His-237. Cysteines 272 and 299 form a disulfide.

This sequence belongs to the peptidase M43B family.

The protein resides in the secreted. Secreted metalloproteinase that allows assimilation of proteinaceous substrates. Plays a pivotal role as a pathogenicity determinant during infections and contributes to the ability of the pathogen to persist within the mammalian host. This is Extracellular metalloprotease AFUA_1G07730 from Aspergillus fumigatus (strain ATCC MYA-4609 / CBS 101355 / FGSC A1100 / Af293) (Neosartorya fumigata).